The following is a 353-amino-acid chain: UPF0283 membrane protein YcjF (353 aa).

Residues 1 to 69 lie on the Periplasmic side of the membrane; the sequence is MTEPLKPRID…LRPKRSLWRK (69 aa). A helical membrane pass occupies residues 70–90; it reads MVMGGLALFGASVVGQGVQWT. At 91 to 99 the chain is on the cytoplasmic side; the sequence is MNAWQTQDW. The helical transmembrane segment at 100-120 threads the bilayer; that stretch reads VALGGCAAGALIIGAGVGSVV. Residues 121–212 lie on the Periplasmic side of the membrane; that stretch reads TEWRRLWRLR…ARREISRSAA (92 aa). The chain crosses the membrane as a helical span at residues 213-233; it reads ESTLMIAVSPLALVDMAFIAW. The Cytoplasmic portion of the chain corresponds to 234–353; sequence RNLRLINRIA…LQKGKTPSEK (120 aa).

The protein belongs to the UPF0283 family.

The protein localises to the cell inner membrane. This chain is UPF0283 membrane protein YcjF (ycjF), found in Escherichia coli O157:H7.